The primary structure comprises 532 residues: Telomerase Cajal body protein 1 (532 aa).

Residues 1–48 (MKTSEELRLAPDSLPSDLVPAPVLQASPADKNTDSEPVPPPCGGDDQL) form a disordered region. Ser-27, Ser-61, and Ser-83 each carry phosphoserine. Residues 83–115 (SPRIEEQEVPENASLPVEETNRPELESGEAMEG) form a disordered region. 6 WD repeats span residues 151–190 (RSENFLKGCKWAPDGSCILTNSADNVLRIYNLPPELYSES), 206–251 (EGDT…LRAS), 256–297 (NHLD…RDCE), 307–348 (GQSG…ALLG), 349–389 (GHQG…HLLW), and 395–434 (VTTNQRIYFDLDPSGQFLVSGNTSGVVSVWDISGAFSDCK). The residue at position 474 (Thr-474) is a Phosphothreonine. Residue Ser-476 is modified to Phosphoserine. The segment at 505 to 532 (CGGGPDPSNPDEDQDEKGQGRTEAVGMS) is disordered.

Belongs to the TCAB1 family. As to quaternary structure, component of the telomerase holoenzyme complex composed of one molecule of TERT, one molecule of WRAP53/TCAB1, two molecules of H/ACA ribonucleoprotein complex subunits DKC1, NOP10, NHP2 and GAR1, and a telomerase RNA template component (TERC). The telomerase holoenzyme complex is associated with TEP1, SMG6/EST1A and POT1. Interacts with the chaperonin-containing T-complex (TRiC) complex; which mediates the folding of WRAP53/TCAB1. Interacts with COIL. Interacts with SMN1. Interacts with RNF8. Interacts with histone H2AX. Phosphorylated at Ser-61 by ATM in response to DNA damage, promoting its interaction with histone H2AX and localization to sites of DNA double-strand breaks.

It localises to the nucleus. The protein resides in the cajal body. Its subcellular location is the chromosome. The protein localises to the telomere. RNA chaperone that plays a key role in telomere maintenance and RNA localization to Cajal bodies. Specifically recognizes and binds the Cajal body box (CAB box) present in both small Cajal body RNAs (scaRNAs) and telomerase RNA template component (TERC). Essential component of the telomerase holoenzyme complex, a ribonucleoprotein complex essential for the replication of chromosome termini that elongates telomeres in most eukaryotes. In the telomerase holoenzyme complex, required to stimulate the catalytic activity of the complex. Acts by specifically binding the CAB box of the TERC RNA and controlling the folding of the CR4/CR5 region of the TERC RNA, a critical step for telomerase activity. In addition, also controls telomerase holoenzyme complex localization to Cajal body. During S phase, required for delivery of TERC to telomeres during S phase and for telomerase activity. In addition to its role in telomere maintenance, also required for Cajal body formation, probably by mediating localization of scaRNAs to Cajal bodies. Also plays a role in DNA repair: phosphorylated by ATM in response to DNA damage and relocalizes to sites of DNA double-strand breaks to promote the repair of DNA double-strand breaks. Acts by recruiting the ubiquitin ligase RNF8 to DNA breaks and promote both homologous recombination (HR) and non-homologous end joining (NHEJ). In Rattus norvegicus (Rat), this protein is Telomerase Cajal body protein 1.